Reading from the N-terminus, the 249-residue chain is Enolase-phosphatase E1 (249 aa).

It belongs to the HAD-like hydrolase superfamily. MasA/MtnC family. As to quaternary structure, monomer. It depends on Mg(2+) as a cofactor.

It catalyses the reaction 5-methylsulfanyl-2,3-dioxopentyl phosphate + H2O = 1,2-dihydroxy-5-(methylsulfanyl)pent-1-en-3-one + phosphate. It participates in amino-acid biosynthesis; L-methionine biosynthesis via salvage pathway; L-methionine from S-methyl-5-thio-alpha-D-ribose 1-phosphate: step 3/6. The protein operates within amino-acid biosynthesis; L-methionine biosynthesis via salvage pathway; L-methionine from S-methyl-5-thio-alpha-D-ribose 1-phosphate: step 4/6. Functionally, bifunctional enzyme that catalyzes the enolization of 2,3-diketo-5-methylthiopentyl-1-phosphate (DK-MTP-1-P) into the intermediate 2-hydroxy-3-keto-5-methylthiopentenyl-1-phosphate (HK-MTPenyl-1-P), which is then dephosphorylated to form the acireductone 1,2-dihydroxy-3-keto-5-methylthiopentene (DHK-MTPene). The sequence is that of Enolase-phosphatase E1 from Synechococcus sp. (strain CC9605).